The sequence spans 1292 residues: DNA-directed RNA polymerase subunit beta' (1292 aa).

Positions 70, 72, 85, and 88 each coordinate Zn(2+). Mg(2+) is bound by residues Asp-532, Asp-534, and Asp-536. Positions 911, 987, 994, and 997 each coordinate Zn(2+).

The protein belongs to the RNA polymerase beta' chain family. As to quaternary structure, the RNAP catalytic core consists of 2 alpha, 1 beta, 1 beta' and 1 omega subunit. When a sigma factor is associated with the core the holoenzyme is formed, which can initiate transcription. Mg(2+) serves as cofactor. Requires Zn(2+) as cofactor.

It catalyses the reaction RNA(n) + a ribonucleoside 5'-triphosphate = RNA(n+1) + diphosphate. Its function is as follows. DNA-dependent RNA polymerase catalyzes the transcription of DNA into RNA using the four ribonucleoside triphosphates as substrates. The chain is DNA-directed RNA polymerase subunit beta' from Mycoplasma genitalium (strain ATCC 33530 / DSM 19775 / NCTC 10195 / G37) (Mycoplasmoides genitalium).